Reading from the N-terminus, the 288-residue chain is Type II iodothyronine deiodinase (288 aa).

At 1 to 5 (MPHVN) the chain is on the lumenal side. Residues 6-26 (LLVVLLILPGVFSNCLFLALY) form a helical; Signal-anchor for type III membrane protein membrane-spanning segment. The Cytoplasmic portion of the chain corresponds to 27–288 (DAVSFLRRAL…SFLESVKASR (262 aa)). The tract at residues 99 to 130 (SCAASSSSSHETPTPRTTAEAAATVTTSTTTT) is disordered. Residue Sec-160 is part of the active site. Sec-160 is a non-standard amino acid (selenocysteine).

It belongs to the iodothyronine deiodinase family. As to quaternary structure, predominantly monomer. Can form homodimers but homodimerization is not essential for enzyme activity. As to expression, expressed in intestine, liver, kidney and brain of immediately premetamorphic larvae, of larvae in all stages of metamorphosis and of parasitic feeding juveniles. In immediately premetamorphic larvae, levels are significantly higher in intestine and liver than in kidney and brain.

The protein localises to the endoplasmic reticulum membrane. It catalyses the reaction 3,3',5-triiodo-L-thyronine + iodide + A + H(+) = L-thyroxine + AH2. It carries out the reaction 3,3'-diiodo-L-thyronine + iodide + A + H(+) = 3,3',5'-triiodo-L-thyronine + AH2. The enzyme catalyses 3'-iodo-L-thyronine + iodide + A + H(+) = 3',5'-diiodo-L-thyronine + AH2. The catalysed reaction is 3,3'-diiodothyronamine + iodide + A + H(+) = 3,3',5'-triiodothyronamine + AH2. It catalyses the reaction 3'-iodothyronamine + iodide + A + H(+) = 3',5'-diiodothyronamine + AH2. In terms of biological role, plays a crucial role in the metabolism of thyroid hormones (TH) and has specific roles in TH activation and inactivation by deiodination. Catalyzes the deiodination of L-thyroxine (T4) to 3,5,3'-triiodothyronine (T3), 3,3',5'-triiodothyronine (rT3) to 3,3'-diiodothyronine (3,3'-T2) and 3',5'-diiodothyronine (3',5'-T2) to 3'-monoiodothyronine (3'-T1) via outer-ring deiodination (ORD). Catalyzes the phenolic ring deiodinations of 3,3',5'-triiodothyronamine and 3',5'- diiodothyronamine. The polypeptide is Type II iodothyronine deiodinase (Petromyzon marinus (Sea lamprey)).